We begin with the raw amino-acid sequence, 145 residues long: MLVPTRVKHRKQHRGRMHGKATRGNTITFGEYGLVALEPAWITNRQIEAARIAMTRYIKRGGKVWIKIFPDKPITAKPAETRMGSGKGSPEYWVAVVKPGRVMFELAGVPEEIAKEALRLAMHKLPVKCKIVRREELEGGDANEN.

Over residues Met1–Ala21 the composition is skewed to basic residues. Positions Met1 to Thr22 are disordered.

It belongs to the universal ribosomal protein uL16 family. In terms of assembly, part of the 50S ribosomal subunit.

In terms of biological role, binds 23S rRNA and is also seen to make contacts with the A and possibly P site tRNAs. This Desulfitobacterium hafniense (strain Y51) protein is Large ribosomal subunit protein uL16.